The chain runs to 107 residues: Homeobox protein HD-7 (107 aa).

A DNA-binding region (homeobox) is located at residues 21-80 (KPGEKVRKSEFQKEVLKKVYQATPYPTWENKIDIGILISLSPRAVDIWFQNKRHINKGKN).

The protein localises to the nucleus. The chain is Homeobox protein HD-7 (HD-7) from Encephalitozoon cuniculi (strain GB-M1) (Microsporidian parasite).